The chain runs to 214 residues: UPF0502 protein Acid345_3645 (214 aa).

Belongs to the UPF0502 family.

The sequence is that of UPF0502 protein Acid345_3645 from Koribacter versatilis (strain Ellin345).